Here is a 208-residue protein sequence, read N- to C-terminus: High frequency lysogenization protein HflD homolog (208 aa).

This sequence belongs to the HflD family.

Its subcellular location is the cytoplasm. It is found in the cell inner membrane. In Pseudomonas putida (strain ATCC 700007 / DSM 6899 / JCM 31910 / BCRC 17059 / LMG 24140 / F1), this protein is High frequency lysogenization protein HflD homolog.